A 787-amino-acid chain; its full sequence is Signal transducer and activator of transcription 5B (787 aa).

At Y90 the chain carries Phosphotyrosine. Residues S128 and S193 each carry the phosphoserine modification. Positions 232-321 are required for interaction with NMI; the sequence is KHQKTLQLLR…MLAEVNATIT (90 aa). In terms of domain architecture, SH2 spans 589 to 686; the sequence is WNDGAILGFV…EVYSKYYTPV (98 aa). The residue at position 682 (Y682) is a Phosphotyrosine. A Phosphotyrosine; by HCK, JAK and PTK6 modification is found at Y699.

This sequence belongs to the transcription factor STAT family. As to quaternary structure, upon activation, forms homodimers. Forms also heterodimers with related family members. Binds NR3C1. Interacts with NCOA1. Interacts with NMI. Interacts with SOCS7. Interacts (via SH2 domain) with INSR. Interacts with CPEB3; this inhibits STAT5B-mediated transcriptional activation. Post-translationally, tyrosine phosphorylated in response to signaling via activated KIT, resulting in translocation to the nucleus. Tyrosine phosphorylated in response to signaling via activated FLT3; wild-type FLT3 results in much weaker phosphorylation than constitutively activated mutant FLT3. Alternatively, can be phosphorylated by JAK2. Phosphorylation at Tyr-699 by PTK6 or HCK leads to an increase of its transcriptional activity.

It is found in the cytoplasm. The protein resides in the nucleus. Its function is as follows. Carries out a dual function: signal transduction and activation of transcription. Mediates cellular responses to the cytokine KITLG/SCF and other growth factors. Binds to the GAS element and activates PRL-induced transcription. Positively regulates hematopoietic/erythroid differentiation. This is Signal transducer and activator of transcription 5B (STAT5B) from Homo sapiens (Human).